An 814-amino-acid polypeptide reads, in one-letter code: E3 ubiquitin-protein ligase TRIM71 (814 aa).

The RING-type zinc-finger motif lies at 12-76 (CPLCKEMCVS…SLQLRCPVCD (65 aa)). The segment at 111 to 146 (QQQSNGGRTASNRQRSASCSSSGLLRRAPPSQSEPR) is disordered. Over residues 120-138 (ASNRQRSASCSSSGLLRRA) the composition is skewed to low complexity. Residues 142-189 (QSEPRCSSCDDGNGASSHCLDCQENLCDNCLRAHQRVRLTKDHFIERF) form a B box-type 1; atypical zinc finger. Positions 147, 150, 171, 175, 224, 227, 247, and 252 each coordinate Zn(2+). Residues 219-260 (PERLYCQQHDEEVLHFYCDSCSVPICRECTMGRHAGHSFVYL) form a B box-type 2 zinc finger. Residues 282 to 370 (RQAIQLSLEQ…INAVQQVLEE (89 aa)) adopt a coiled-coil conformation. The stretch at 425 to 526 (SSGAFAALTK…IENSPFKVNV (102 aa)) is one Filamin repeat. 6 NHL repeats span residues 539–582 (TLSF…FKPC), 586–629 (HHKF…FTFE), 633–676 (LLKF…FGPD), 680–723 (LNKY…IKPD), 727–770 (AHFL…FEPN), and 774–814 (LCKF…ILAF).

The protein belongs to the TRIM/RBCC family.

The protein resides in the cytoplasm. It localises to the P-body. It catalyses the reaction S-ubiquitinyl-[E2 ubiquitin-conjugating enzyme]-L-cysteine + [acceptor protein]-L-lysine = [E2 ubiquitin-conjugating enzyme]-L-cysteine + N(6)-ubiquitinyl-[acceptor protein]-L-lysine.. The protein operates within protein modification; protein ubiquitination. Its function is as follows. E3 ubiquitin-protein ligase that cooperates with the microRNAs (miRNAs) machinery and promotes embryonic stem cells proliferation and maintenance. Binds to miRNAs and participates in post-transcriptional repression of transcripts. Required to maintain proliferation and prevent premature differentiation of neural progenitor cells during early neural development. The sequence is that of E3 ubiquitin-protein ligase TRIM71 (trim71) from Xenopus tropicalis (Western clawed frog).